Consider the following 439-residue polypeptide: Methylenetetrahydrofolate--tRNA-(uracil-5-)-methyltransferase TrmFO (439 aa).

9–14 (GAGLAG) lines the FAD pocket.

It belongs to the MnmG family. TrmFO subfamily. FAD is required as a cofactor.

It is found in the cytoplasm. The catalysed reaction is uridine(54) in tRNA + (6R)-5,10-methylene-5,6,7,8-tetrahydrofolate + NADH + H(+) = 5-methyluridine(54) in tRNA + (6S)-5,6,7,8-tetrahydrofolate + NAD(+). It catalyses the reaction uridine(54) in tRNA + (6R)-5,10-methylene-5,6,7,8-tetrahydrofolate + NADPH + H(+) = 5-methyluridine(54) in tRNA + (6S)-5,6,7,8-tetrahydrofolate + NADP(+). Functionally, catalyzes the folate-dependent formation of 5-methyl-uridine at position 54 (M-5-U54) in all tRNAs. The protein is Methylenetetrahydrofolate--tRNA-(uracil-5-)-methyltransferase TrmFO of Desulforudis audaxviator (strain MP104C).